A 250-amino-acid polypeptide reads, in one-letter code: Probable transcriptional regulatory protein SYNAS_07390 (250 aa).

It belongs to the TACO1 family.

It is found in the cytoplasm. The protein is Probable transcriptional regulatory protein SYNAS_07390 of Syntrophus aciditrophicus (strain SB).